Here is a 500-residue protein sequence, read N- to C-terminus: NAD(P)H-quinone oxidoreductase chain 4, chloroplastic (500 aa).

Helical transmembrane passes span 4–24 (FPWL…IFFL), 37–57 (MSIC…HFQL), 87–107 (LGSI…AWPV), 113–130 (LFYF…GLFS), 134–154 (LLLF…LLSM), 167–187 (FILY…GMGL), 211–231 (ILFY…IPLH), 242–262 (HYST…YGLI), 272–292 (AHYL…IYAA), 313–333 (MGFI…GAIL), 334–354 (QILS…TACD), 386–406 (LALP…GLIT), 417–437 (LITF…LSML), and 462–482 (LFLL…PDFV).

This sequence belongs to the complex I subunit 4 family.

Its subcellular location is the plastid. It is found in the chloroplast thylakoid membrane. It carries out the reaction a plastoquinone + NADH + (n+1) H(+)(in) = a plastoquinol + NAD(+) + n H(+)(out). It catalyses the reaction a plastoquinone + NADPH + (n+1) H(+)(in) = a plastoquinol + NADP(+) + n H(+)(out). The chain is NAD(P)H-quinone oxidoreductase chain 4, chloroplastic from Oryza nivara (Indian wild rice).